The sequence spans 280 residues: ATP synthase gamma chain (280 aa).

The protein belongs to the ATPase gamma chain family. As to quaternary structure, F-type ATPases have 2 components, CF(1) - the catalytic core - and CF(0) - the membrane proton channel. CF(1) has five subunits: alpha(3), beta(3), gamma(1), delta(1), epsilon(1). CF(0) has three main subunits: a, b and c.

It localises to the cell membrane. In terms of biological role, produces ATP from ADP in the presence of a proton gradient across the membrane. The gamma chain is believed to be important in regulating ATPase activity and the flow of protons through the CF(0) complex. This is ATP synthase gamma chain from Mycoplasma capricolum subsp. capricolum (strain California kid / ATCC 27343 / NCTC 10154).